The following is a 459-amino-acid chain: Sulfide:quinone oxidoreductase, mitochondrial (459 aa).

The transit peptide at 1-24 (MLTLNSTIKSVTGSFQSASMLARF) directs the protein to the mitochondrion. 35–39 (GGGSA) lines the FAD pocket. Active-site cysteine persulfide intermediate residues include cysteine 204 and cysteine 383.

This sequence belongs to the SQRD family. Requires FAD as cofactor.

The protein resides in the mitochondrion. Functionally, catalyzes the oxidation of hydrogen sulfide, with the help of a quinone. The polypeptide is Sulfide:quinone oxidoreductase, mitochondrial (hmt2) (Schizosaccharomyces pombe (strain 972 / ATCC 24843) (Fission yeast)).